A 2126-amino-acid polypeptide reads, in one-letter code: Phthioceranic/hydroxyphthioceranic acid synthase (2126 aa).

The Ketosynthase family 3 (KS3) domain maps to 24–447 (VTPVAVIGMA…GTNVHAVVEQ (424 aa)). The active-site Acyl-thioester intermediate; for beta-ketoacyl synthase activity is C196. Active-site for beta-ketoacyl synthase activity residues include H331 and H367. Residues 449-549 (PQTEAQPHAA…VYQPAVGQDD (101 aa)) form a linker domain (LD) region. Residues 550–849 (RGPVWLFSGQ…VAALAGMRRE (300 aa)) form an acyltransferase (AT) region. S641 functions as the Acyl-ester intermediate; for acyltransferase activity in the catalytic mechanism. The segment at 909–1191 (STVAVHPLLG…LAVCGLRIGT (283 aa)) is dehydratase (DH). An N-terminal hotdog fold region spans residues 914–1032 (HPLLGAHVRL…RRASAVLQQV (119 aa)). The region spanning 914-1198 (HPLLGAHVRL…IGTGVSERDK (285 aa)) is the PKS/mFAS DH domain. Catalysis depends on H947, which acts as the Proton acceptor; for dehydratase activity. The C-terminal hotdog fold stretch occupies residues 1051–1198 (PCRVDGEDLR…IGTGVSERDK (148 aa)). The active-site Proton donor; for dehydratase activity is the D1115. Positions 1227–1398 (KWLLISDCAA…SEEDETAWRD (172 aa)) are pseudo beta-ketoacyl reductase (PsiKR). Positions 1426–1750 (SGMRLQIRTP…EHTGKLVLHI (325 aa)) are enoylreductase (ER). The beta-ketoacyl reductase (KR) stretch occupies residues 1772-2019 (GSYIITGGLG…AERSRFFEVF (248 aa)). NADP(+) contacts are provided by residues 1780–1783 (LGGL), 1803–1806 (SRTQ), 1831–1832 (DI), and 1904–1905 (FS). Residues 2040–2126 (DEWPARLRQL…DAPAAALSSQ (87 aa)) enclose the Carrier domain. S2075 carries the O-(pantetheine 4'-phosphoryl)serine modification.

Pantetheine 4'-phosphate is required as a cofactor.

It catalyses the reaction hexadecanoyl-[(hydroxy)phthioceranic acid synthase] + 7 (S)-methylmalonyl-CoA + 14 NADPH + 21 H(+) = C37-phthioceranyl-[(hydroxy)phthioceranic acid synthase] + 7 CO2 + 14 NADP(+) + 7 CoA + 7 H2O. It carries out the reaction hexadecanoyl-[(hydroxy)phthioceranic acid synthase] + 8 (S)-methylmalonyl-CoA + 16 NADPH + 24 H(+) = C40-phthioceranyl-[(hydroxy)phthioceranic acid synthase] + 8 CO2 + 16 NADP(+) + 8 CoA + 8 H2O. The protein operates within lipid metabolism; fatty acid biosynthesis. It functions in the pathway glycolipid metabolism; sulfolipid-1 biosynthesis. Functionally, involved in sulfolipid-1 biosynthesis. Catalyzes the synthesis of the hepta- and octamethyl phthioceranic and hydroxyphthioceranic acids, the methyl-branched acyl constituents of sulfolipids. This chain is Phthioceranic/hydroxyphthioceranic acid synthase (pks2), found in Mycobacterium bovis (strain ATCC BAA-935 / AF2122/97).